Reading from the N-terminus, the 479-residue chain is Serine--tRNA ligase, mitochondrial (479 aa).

The N-terminal 42 residues, 1–42 (MRLTNRRFSTFLGNALPSKKKGFIFMSQLLYLRTFSTHTSYL), are a transit peptide targeting the mitochondrion. 287–289 (TAE) lines the L-serine pocket. An ATP-binding site is contributed by 317 to 319 (RRE). L-serine is bound at residue glutamate 340. An ATP-binding site is contributed by 404–407 (EITS). Position 438 (threonine 438) interacts with L-serine.

It belongs to the class-II aminoacyl-tRNA synthetase family. Type-1 seryl-tRNA synthetase subfamily. Homodimer. The tRNA molecule probably binds across the dimer.

It is found in the mitochondrion matrix. It carries out the reaction tRNA(Ser) + L-serine + ATP = L-seryl-tRNA(Ser) + AMP + diphosphate + H(+). Its function is as follows. Catalyzes the attachment of serine to tRNA(Ser). Is also probably able to aminoacylate tRNA(Sec) with serine, to form the misacylated tRNA L-seryl-tRNA(Sec), which will be further converted into selenocysteinyl-tRNA(Sec). In Schizosaccharomyces pombe (strain 972 / ATCC 24843) (Fission yeast), this protein is Serine--tRNA ligase, mitochondrial (dia4).